The primary structure comprises 894 residues: GTPase-activating protein GYP5 (894 aa).

The span at 1-23 (MSSDKSIEKNTDTIASEVHEGDN) shows a compositional bias: basic and acidic residues. The interval 1-324 (MSSDKSIEKN…VPPPLEEEMK (324 aa)) is disordered. 2 positions are modified to phosphoserine: serine 25 and serine 30. At threonine 89 the chain carries Phosphothreonine. A compositionally biased stretch (basic and acidic residues) spans 134–164 (IEKEYDAVKENEKVYADTKEVVSSPENREVT). Composition is skewed to polar residues over residues 184–200 (GTTT…SSEV) and 268–279 (SSENEVSAIPTT). Serine 389 bears the Phosphoserine mark. In terms of domain architecture, Rab-GAP TBC spans 451-630 (GIPPQIRGII…RIFDIVFVEG (180 aa)). Positions 732–872 (EKEQKKEDHY…INKEQVSTAS (141 aa)) form a coiled coil.

The protein belongs to the GYP5 family. Interacts with GYL1 and RVS167; and is part of SEC4-containing complexes.

The protein resides in the cytoplasm. Its subcellular location is the bud. It localises to the bud neck. Functionally, GTPase-activating protein which accelerates the GTP hydrolysis rate of YPT1 and SEC4. Involved in ER to Golgi trafficking and polarized exocytosis. In Saccharomyces cerevisiae (strain ATCC 204508 / S288c) (Baker's yeast), this protein is GTPase-activating protein GYP5 (GYP5).